The chain runs to 103 residues: Small ribosomal subunit protein uS10 (103 aa).

The protein belongs to the universal ribosomal protein uS10 family. In terms of assembly, part of the 30S ribosomal subunit.

Its function is as follows. Involved in the binding of tRNA to the ribosomes. In Paraburkholderia xenovorans (strain LB400), this protein is Small ribosomal subunit protein uS10.